The primary structure comprises 439 residues: Ribosomal protein uS12 methylthiotransferase RimO (439 aa).

One can recognise an MTTase N-terminal domain in the interval 2–114 (SKLYLMSLGC…IDEMILKKTN (113 aa)). Residues cysteine 11, cysteine 45, cysteine 77, cysteine 146, cysteine 150, and cysteine 153 each coordinate [4Fe-4S] cluster. A Radical SAM core domain is found at 132–363 (TGSNSHAFIK…VDEVIEKSFE (232 aa)).

It belongs to the methylthiotransferase family. RimO subfamily. Requires [4Fe-4S] cluster as cofactor.

The protein resides in the cytoplasm. The catalysed reaction is L-aspartate(89)-[ribosomal protein uS12]-hydrogen + (sulfur carrier)-SH + AH2 + 2 S-adenosyl-L-methionine = 3-methylsulfanyl-L-aspartate(89)-[ribosomal protein uS12]-hydrogen + (sulfur carrier)-H + 5'-deoxyadenosine + L-methionine + A + S-adenosyl-L-homocysteine + 2 H(+). Functionally, catalyzes the methylthiolation of an aspartic acid residue of ribosomal protein uS12. The chain is Ribosomal protein uS12 methylthiotransferase RimO from Campylobacter jejuni subsp. jejuni serotype O:6 (strain 81116 / NCTC 11828).